Consider the following 385-residue polypeptide: Acetylornithine deacetylase (385 aa).

Residue H80 coordinates Zn(2+). Residue D82 is part of the active site. A Zn(2+)-binding site is contributed by D112. Residue E144 is the Proton acceptor of the active site. Residues E145, E169, and H355 each coordinate Zn(2+).

Belongs to the peptidase M20A family. ArgE subfamily. Homodimer. Requires Zn(2+) as cofactor. The cofactor is Co(2+). Glutathione serves as cofactor.

The protein localises to the cytoplasm. It carries out the reaction N(2)-acetyl-L-ornithine + H2O = L-ornithine + acetate. The protein operates within amino-acid biosynthesis; L-arginine biosynthesis; L-ornithine from N(2)-acetyl-L-ornithine (linear): step 1/1. Functionally, catalyzes the hydrolysis of the amide bond of N(2)-acetylated L-amino acids. Cleaves the acetyl group from N-acetyl-L-ornithine to form L-ornithine, an intermediate in L-arginine biosynthesis pathway, and a branchpoint in the synthesis of polyamines. In Photorhabdus laumondii subsp. laumondii (strain DSM 15139 / CIP 105565 / TT01) (Photorhabdus luminescens subsp. laumondii), this protein is Acetylornithine deacetylase.